The sequence spans 219 residues: Redox-sensing transcriptional repressor Rex (219 aa).

The segment at residues 18–57 is a DNA-binding region (H-T-H motif); the sequence is LYYRFIQSLYNSGKLRVSSAELSEAVKVDSATIRRDFSYF. Residue 92-97 coordinates NAD(+); sequence GVGHLG.

Belongs to the transcriptional regulatory Rex family. In terms of assembly, homodimer.

The protein localises to the cytoplasm. Modulates transcription in response to changes in cellular NADH/NAD(+) redox state. The sequence is that of Redox-sensing transcriptional repressor Rex from Exiguobacterium sibiricum (strain DSM 17290 / CCUG 55495 / CIP 109462 / JCM 13490 / 255-15).